The chain runs to 387 residues: Phosphoglycerate kinase (387 aa).

Residues 21–23 (DLN), Arg-36, 59–62 (HLGR), Arg-113, and Arg-146 contribute to the substrate site. Residues Lys-197, Glu-314, and 340–343 (GGDT) contribute to the ATP site.

It belongs to the phosphoglycerate kinase family. Monomer.

It is found in the cytoplasm. It catalyses the reaction (2R)-3-phosphoglycerate + ATP = (2R)-3-phospho-glyceroyl phosphate + ADP. Its pathway is carbohydrate degradation; glycolysis; pyruvate from D-glyceraldehyde 3-phosphate: step 2/5. This Photorhabdus laumondii subsp. laumondii (strain DSM 15139 / CIP 105565 / TT01) (Photorhabdus luminescens subsp. laumondii) protein is Phosphoglycerate kinase.